A 146-amino-acid polypeptide reads, in one-letter code: Snaclec coagulation factor IX/factor X-binding protein subunit B (146 aa).

The first 23 residues, 1-23 (MGRFIFLSFGLLVVFLSLSGTGA), serve as a signal peptide directing secretion. 3 disulfides stabilise this stretch: cysteine 25-cysteine 36, cysteine 53-cysteine 142, and cysteine 119-cysteine 134. One can recognise a C-type lectin domain in the interval 32–143 (YEGHCYKPFN…CRMEAYFVCE (112 aa)). Ca(2+) contacts are provided by serine 64 and glutamate 70. Glutamate 143 provides a ligand contact to Ca(2+).

Belongs to the snaclec family. As to quaternary structure, heterodimer with subunit A of IX/X-bp or IX-bp; disulfide-linked. In terms of tissue distribution, expressed by the venom gland.

The protein localises to the secreted. When linked to subunit A of IX/X-bp, anticoagulant protein which binds to the gamma-carboxyglutamic acid-domain regions of factors IX (F9) and factor X (F10) in the presence of calcium with a 1 to 1 stoichiometry. In terms of biological role, when linked to subunit A of IX-bp, anticoagulant protein which binds to the gamma-carboxyglutamic acid-domain regions of factor IX (but not to factor X) in the presence of calcium with a 1 to 1 stoichiometry. The sequence is that of Snaclec coagulation factor IX/factor X-binding protein subunit B from Gloydius halys (Chinese water mocassin).